The sequence spans 323 residues: MISVNLASLPIVEDMINRKEDLNIEVIKLENGATVLDCGVNVMGSFEAGKLFTKICLGGLAHVGISISGSLDNKLVLPCVKIKTSHPAIATLGAQKAGWSVSVGKYFAMGSGPARALAMMPKATYEEIDYKDEADVAILCLESSQLPDENVADHVAEKCGVDVSKVYLLVAPTASMVGAVQISGRVVENGTYKMLEALHFDVRKVKFAAGIAPVAPVIGDDLKMMGATNDMVLYGGRTYYYVKSDEGDDIENLCKSLPSCSAETYGKPFLDVFKEANYDFYKIDKGIFAPAVVTINDLRTGKLMSYGETNVDVIKKSLKFSQL.

Belongs to the MCH family.

The protein localises to the cytoplasm. The enzyme catalyses 5,10-methenyl-5,6,7,8-tetrahydromethanopterin + H2O = N(5)-formyl-5,6,7,8-tetrahydromethanopterin + H(+). Its pathway is one-carbon metabolism; methanogenesis from CO(2); 5,10-methenyl-5,6,7,8-tetrahydromethanopterin from CO(2): step 3/3. Functionally, catalyzes the reversible interconversion of 5-formyl-H(4)MPT to methenyl-H(4)MPT(+). The protein is Methenyltetrahydromethanopterin cyclohydrolase of Methanococcus maripaludis (strain C5 / ATCC BAA-1333).